The following is a 142-amino-acid chain: Large ribosomal subunit protein uL13 (142 aa).

The protein belongs to the universal ribosomal protein uL13 family. Part of the 50S ribosomal subunit.

Its function is as follows. This protein is one of the early assembly proteins of the 50S ribosomal subunit, although it is not seen to bind rRNA by itself. It is important during the early stages of 50S assembly. The polypeptide is Large ribosomal subunit protein uL13 (Desulfotalea psychrophila (strain LSv54 / DSM 12343)).